The sequence spans 522 residues: Acetylcholine receptor subunit delta (522 aa).

The signal sequence occupies residues 1 to 21 (MGNIHFVYLLISCLYYSGCSG). The Extracellular segment spans residues 22–245 (VNEEERLIND…VTFYLIIRRK (224 aa)). N-linked (GlcNAc...) asparagine glycosylation is found at Asn91, Asn164, and Asn229. An intrachain disulfide couples Cys151 to Cys165. A run of 3 helical transmembrane segments spans residues 246–270 (PLFY…AFYL), 278–295 (MSTA…LLLT), and 312–333 (YLMF…VLNF). At 334–476 (HFRTPSTHVL…WNLVGQTIDR (143 aa)) the chain is on the cytoplasmic side. Tyr393 carries the phosphotyrosine; by Tyr-kinases modification. Residues 477-497 (LSMFIITPVMVLGTIFIFVMG) form a helical membrane-spanning segment.

The protein belongs to the ligand-gated ion channel (TC 1.A.9) family. Acetylcholine receptor (TC 1.A.9.1) subfamily. As to quaternary structure, pentamer of two alpha chains, and one each of the beta, delta, and gamma chains.

It is found in the postsynaptic cell membrane. The protein resides in the cell membrane. It carries out the reaction K(+)(in) = K(+)(out). The enzyme catalyses Na(+)(in) = Na(+)(out). Its function is as follows. After binding acetylcholine, the AChR responds by an extensive change in conformation that affects all subunits and leads to opening of an ion-conducting channel across the plasma membrane. In Tetronarce californica (Pacific electric ray), this protein is Acetylcholine receptor subunit delta (chrnd).